We begin with the raw amino-acid sequence, 342 residues long: Holliday junction branch migration complex subunit RuvB (342 aa).

The large ATPase domain (RuvB-L) stretch occupies residues 1 to 185 (MRKDYLNSNK…FGINTRLAYY (185 aa)). Residues leucine 24, arginine 25, glycine 66, lysine 69, threonine 70, threonine 71, 132–134 (EDF), arginine 175, tyrosine 185, and arginine 222 each bind ATP. Residue threonine 70 coordinates Mg(2+). The tract at residues 186–256 (DVTLLTQIVK…IAQMALKALD (71 aa)) is small ATPAse domain (RuvB-S). Positions 259–342 (EDGLDEMDNR…PPQRAGTLFE (84 aa)) are head domain (RuvB-H). DNA is bound by residues arginine 314 and arginine 319.

Belongs to the RuvB family. In terms of assembly, homohexamer. Forms an RuvA(8)-RuvB(12)-Holliday junction (HJ) complex. HJ DNA is sandwiched between 2 RuvA tetramers; dsDNA enters through RuvA and exits via RuvB. An RuvB hexamer assembles on each DNA strand where it exits the tetramer. Each RuvB hexamer is contacted by two RuvA subunits (via domain III) on 2 adjacent RuvB subunits; this complex drives branch migration. In the full resolvosome a probable DNA-RuvA(4)-RuvB(12)-RuvC(2) complex forms which resolves the HJ.

Its subcellular location is the cytoplasm. It carries out the reaction ATP + H2O = ADP + phosphate + H(+). The RuvA-RuvB-RuvC complex processes Holliday junction (HJ) DNA during genetic recombination and DNA repair, while the RuvA-RuvB complex plays an important role in the rescue of blocked DNA replication forks via replication fork reversal (RFR). RuvA specifically binds to HJ cruciform DNA, conferring on it an open structure. The RuvB hexamer acts as an ATP-dependent pump, pulling dsDNA into and through the RuvAB complex. RuvB forms 2 homohexamers on either side of HJ DNA bound by 1 or 2 RuvA tetramers; 4 subunits per hexamer contact DNA at a time. Coordinated motions by a converter formed by DNA-disengaged RuvB subunits stimulates ATP hydrolysis and nucleotide exchange. Immobilization of the converter enables RuvB to convert the ATP-contained energy into a lever motion, pulling 2 nucleotides of DNA out of the RuvA tetramer per ATP hydrolyzed, thus driving DNA branch migration. The RuvB motors rotate together with the DNA substrate, which together with the progressing nucleotide cycle form the mechanistic basis for DNA recombination by continuous HJ branch migration. Branch migration allows RuvC to scan DNA until it finds its consensus sequence, where it cleaves and resolves cruciform DNA. The polypeptide is Holliday junction branch migration complex subunit RuvB (Amoebophilus asiaticus (strain 5a2)).